We begin with the raw amino-acid sequence, 215 residues long: 3-demethoxyubiquinol 3-hydroxylase (215 aa).

Residues E64, E94, H97, E146, E178, and H181 each coordinate Fe cation.

Belongs to the COQ7 family. Fe cation serves as cofactor.

It is found in the cell membrane. It carries out the reaction a 5-methoxy-2-methyl-3-(all-trans-polyprenyl)benzene-1,4-diol + AH2 + O2 = a 3-demethylubiquinol + A + H2O. It participates in cofactor biosynthesis; ubiquinone biosynthesis. Functionally, catalyzes the hydroxylation of 2-nonaprenyl-3-methyl-6-methoxy-1,4-benzoquinol during ubiquinone biosynthesis. The sequence is that of 3-demethoxyubiquinol 3-hydroxylase from Pseudomonas putida (strain W619).